Reading from the N-terminus, the 192-residue chain is Superoxide dismutase [Fe] (192 aa).

Fe cation contacts are provided by His-27, His-74, Asp-157, and His-161.

Belongs to the iron/manganese superoxide dismutase family. Homodimer. Fe cation serves as cofactor.

The catalysed reaction is 2 superoxide + 2 H(+) = H2O2 + O2. Its function is as follows. Destroys superoxide anion radicals which are normally produced within the cells and which are toxic to biological systems. The polypeptide is Superoxide dismutase [Fe] (sodB) (Bordetella pertussis (strain Tohama I / ATCC BAA-589 / NCTC 13251)).